Reading from the N-terminus, the 72-residue chain is Translation initiation factor IF-1 (72 aa).

Residues 1 to 72 form the S1-like domain; it reads MSKEDMIEFS…TKGRITFRFK (72 aa).

The protein belongs to the IF-1 family. As to quaternary structure, component of the 30S ribosomal translation pre-initiation complex which assembles on the 30S ribosome in the order IF-2 and IF-3, IF-1 and N-formylmethionyl-tRNA(fMet); mRNA recruitment can occur at any time during PIC assembly.

It localises to the cytoplasm. Its function is as follows. One of the essential components for the initiation of protein synthesis. Stabilizes the binding of IF-2 and IF-3 on the 30S subunit to which N-formylmethionyl-tRNA(fMet) subsequently binds. Helps modulate mRNA selection, yielding the 30S pre-initiation complex (PIC). Upon addition of the 50S ribosomal subunit IF-1, IF-2 and IF-3 are released leaving the mature 70S translation initiation complex. This Granulibacter bethesdensis (strain ATCC BAA-1260 / CGDNIH1) protein is Translation initiation factor IF-1.